Reading from the N-terminus, the 44-residue chain is Large ribosomal subunit protein bL34 (44 aa).

The protein belongs to the bacterial ribosomal protein bL34 family.

This Wolbachia pipientis wMel protein is Large ribosomal subunit protein bL34.